The following is a 393-amino-acid chain: 4-hydroxyphenylpyruvate dioxygenase (393 aa).

N-acetylthreonine is present on Thr-2. VOC domains follow at residues 18 to 152 and 180 to 338; these read HFHS…KMTF and IIDH…IFTK. A Fe cation-binding site is contributed by His-183. 3 positions are modified to phosphoserine: Ser-211, Ser-226, and Ser-250. The Fe cation site is built by His-266 and Glu-349.

Belongs to the 4HPPD family. In terms of assembly, homodimer. It depends on Fe cation as a cofactor. In terms of tissue distribution, liver.

It localises to the cytoplasm. The protein resides in the endoplasmic reticulum membrane. Its subcellular location is the golgi apparatus membrane. The enzyme catalyses 3-(4-hydroxyphenyl)pyruvate + O2 = homogentisate + CO2. Its pathway is amino-acid degradation; L-phenylalanine degradation; acetoacetate and fumarate from L-phenylalanine: step 3/6. In terms of biological role, catalyzes the conversion of 4-hydroxyphenylpyruvic acid to homogentisic acid, one of the steps in tyrosine catabolism. This is 4-hydroxyphenylpyruvate dioxygenase (HPD) from Sus scrofa (Pig).